Reading from the N-terminus, the 142-residue chain is ATP synthase epsilon chain (142 aa).

It belongs to the ATPase epsilon chain family. F-type ATPases have 2 components, CF(1) - the catalytic core - and CF(0) - the membrane proton channel. CF(1) has five subunits: alpha(3), beta(3), gamma(1), delta(1), epsilon(1). CF(0) has three main subunits: a, b and c.

Its subcellular location is the cell inner membrane. In terms of biological role, produces ATP from ADP in the presence of a proton gradient across the membrane. The polypeptide is ATP synthase epsilon chain (Shewanella putrefaciens (strain CN-32 / ATCC BAA-453)).